Here is a 721-residue protein sequence, read N- to C-terminus: DNA ligase (721 aa).

Residues Asp-39–Asp-43, Ser-89–Leu-90, and Glu-123 contribute to the NAD(+) site. Residue Lys-125 is the N6-AMP-lysine intermediate of the active site. NAD(+) is bound by residues Arg-146, Glu-186, Lys-302, and Lys-326. Residues Cys-418, Cys-421, Cys-436, and Cys-442 each coordinate Zn(2+). Residues Gln-556 to Glu-588 are disordered. The 81-residue stretch at Thr-641–Gly-721 folds into the BRCT domain.

Belongs to the NAD-dependent DNA ligase family. LigA subfamily. Requires Mg(2+) as cofactor. Mn(2+) is required as a cofactor.

It catalyses the reaction NAD(+) + (deoxyribonucleotide)n-3'-hydroxyl + 5'-phospho-(deoxyribonucleotide)m = (deoxyribonucleotide)n+m + AMP + beta-nicotinamide D-nucleotide.. Its function is as follows. DNA ligase that catalyzes the formation of phosphodiester linkages between 5'-phosphoryl and 3'-hydroxyl groups in double-stranded DNA using NAD as a coenzyme and as the energy source for the reaction. It is essential for DNA replication and repair of damaged DNA. This chain is DNA ligase, found in Novosphingobium aromaticivorans (strain ATCC 700278 / DSM 12444 / CCUG 56034 / CIP 105152 / NBRC 16084 / F199).